The chain runs to 158 residues: Transcription elongation factor GreA (158 aa).

Positions 14 to 76 (VKKLEEELEY…QIENMLKNAN (63 aa)) form a coiled coil.

The protein belongs to the GreA/GreB family.

Functionally, necessary for efficient RNA polymerase transcription elongation past template-encoded arresting sites. The arresting sites in DNA have the property of trapping a certain fraction of elongating RNA polymerases that pass through, resulting in locked ternary complexes. Cleavage of the nascent transcript by cleavage factors such as GreA or GreB allows the resumption of elongation from the new 3'terminus. GreA releases sequences of 2 to 3 nucleotides. The protein is Transcription elongation factor GreA of Clostridium acetobutylicum (strain ATCC 824 / DSM 792 / JCM 1419 / IAM 19013 / LMG 5710 / NBRC 13948 / NRRL B-527 / VKM B-1787 / 2291 / W).